The following is a 377-amino-acid chain: Histidinol-phosphate aminotransferase (377 aa).

K230 carries the post-translational modification N6-(pyridoxal phosphate)lysine.

The protein belongs to the class-II pyridoxal-phosphate-dependent aminotransferase family. Histidinol-phosphate aminotransferase subfamily. Homodimer. It depends on pyridoxal 5'-phosphate as a cofactor.

It carries out the reaction L-histidinol phosphate + 2-oxoglutarate = 3-(imidazol-4-yl)-2-oxopropyl phosphate + L-glutamate. The protein operates within amino-acid biosynthesis; L-histidine biosynthesis; L-histidine from 5-phospho-alpha-D-ribose 1-diphosphate: step 7/9. This chain is Histidinol-phosphate aminotransferase, found in Mycobacterium leprae (strain Br4923).